Reading from the N-terminus, the 1547-residue chain is Transposon Ty3-G Gag-Pol polyprotein (1547 aa).

Ser2 is subject to N-acetylserine. The CCHC-type zinc-finger motif lies at 265 to 282; sequence RLCFYCKKEGHRLNECRA. Asp336 serves as the catalytic For protease activity; shared with dimeric partner. The 178-residue stretch at 620 to 797 folds into the Reverse transcriptase domain; sequence LDNKFIVPSK…EETEFLGYSI (178 aa). Mg(2+) is bound by residues Asp686, Asp748, Asp749, Asp893, Glu936, and Asp961. Residues 893–1011 form the RNase H Ty3/gyspy-type domain; the sequence is DASKDGIGAV…VADAISRAVY (119 aa). The tract at residues 1106-1145 is integrase-type zinc finger-like; sequence HTLFGGHFGVTVTLAKISPIYYWPKLQHSIIQYIRTCVQC. In terms of domain architecture, Integrase catalytic spans 1159-1324; it reads LQPLPIAEGR…SPFEIDLGYL (166 aa). Residues Asp1175 and Asp1236 each coordinate Mg(2+).

In terms of assembly, the protease is a homodimer, whose active site consists of two apposed aspartic acid residues. Post-translationally, initially, virus-like particles (VLPs) are composed of the structural unprocessed proteins Gag and Gag-Pol, and also contain the host initiator methionine tRNA (tRNA(i)-Met) which serves as a primer for minus-strand DNA synthesis, and a dimer of genomic Ty RNA. Processing of the polyproteins occurs within the particle and proceeds by an ordered pathway, called maturation. First, the protease (PR) is released by autocatalytic cleavage of the Gag-Pol polyprotein, and this cleavage is a prerequisite for subsequent processing at the remaining sites to release the mature structural and catalytic proteins. Maturation takes place prior to the RT reaction and is required to produce transposition-competent VLPs.

It is found in the cytoplasm. Its subcellular location is the nucleus. It carries out the reaction DNA(n) + a 2'-deoxyribonucleoside 5'-triphosphate = DNA(n+1) + diphosphate. It catalyses the reaction Endonucleolytic cleavage to 5'-phosphomonoester.. Its function is as follows. Capsid protein (CA) is the structural component of the virus-like particle (VLP), forming the shell that encapsulates the genomic RNA-nucleocapsid complex. Nucleocapsid protein p11 (NC) forms the nucleocore that coats the retro-elements dimeric RNA. Binds these RNAs through its zinc fingers. Promotes primer tRNA(i)-Met annealing to the multipartite primer-binding site (PBS), dimerization of Ty3 RNA and initiation of reverse transcription. In terms of biological role, the aspartyl protease (PR) mediates the proteolytic cleavages of the Gag and Gag-Pol polyproteins after assembly of the VLP. Functionally, reverse transcriptase/ribonuclease H (RT) is a multifunctional enzyme that catalyzes the conversion of the retro-elements RNA genome into dsDNA within the VLP. The enzyme displays a DNA polymerase activity that can copy either DNA or RNA templates, and a ribonuclease H (RNase H) activity that cleaves the RNA strand of RNA-DNA heteroduplexes during plus-strand synthesis and hydrolyzes RNA primers. The conversion leads to a linear dsDNA copy of the retrotransposon that includes long terminal repeats (LTRs) at both ends. Its function is as follows. Integrase (IN) targets the VLP to the nucleus, where a subparticle preintegration complex (PIC) containing at least integrase and the newly synthesized dsDNA copy of the retrotransposon must transit the nuclear membrane. Once in the nucleus, integrase performs the integration of the dsDNA into the host genome. The sequence is that of Transposon Ty3-G Gag-Pol polyprotein (TY3B-G) from Saccharomyces cerevisiae (strain ATCC 204508 / S288c) (Baker's yeast).